The following is a 265-amino-acid chain: Neuronal membrane glycoprotein M6-b (265 aa).

The chain crosses the membrane as a helical span at residues 31-51; it reads GGVPYASLVATILCFSGVALF. N-linked (GlcNAc...) asparagine glycosylation occurs at N73. The next 2 helical transmembrane spans lie at 90 to 110 and 136 to 156; these read VIYG…AEGF and FVFL…FSAV. Residue N177 is glycosylated (N-linked (GlcNAc...) asparagine). Residues 224–244 traverse the membrane as a helical segment; sequence LFIVACAGAGATVIALLIYMM. At S257 the chain carries Phosphoserine.

The protein belongs to the myelin proteolipid protein family. In terms of assembly, interacts with SERT. In terms of tissue distribution, neurons and glia; cerebellar Bergmann glia, in glia within white matter tracts of the cerebellum and cerebrum, and in embryonic dorsal root ganglia.

It localises to the cell membrane. May be involved in neural development. Involved in regulation of osteoblast function and bone formation. Involved in matrix vesicle release by osteoblasts; this function seems to involve maintenance of the actin cytoskeleton. May be involved in cellular trafficking of SERT and thereby in regulation of serotonin uptake. This is Neuronal membrane glycoprotein M6-b (GPM6B) from Homo sapiens (Human).